Reading from the N-terminus, the 632-residue chain is MLYHETFDVIVVGGGHAGTEAALASARTGQKTLLLTHNIDTLGQMSCNPAIGGIGKGHLVKEVDAMGGLMAQAIDHAGIQFRTLNASKGPAVRATRAQADRALYKAYVRDFLENAPNLTLFQQAVDDLIVEQDQVRGVITQMGLKFHAKAVVLTVGTFLGGKIHIGLQSSSGGRAGDPPSIALADRLRELPFRVDRLKTGTPPRIDARSVDFSVLEAQHGDNPTPVFSFMGDRTHHPRQIPCFITHTNEQTHEVIRNNLDRSPMYAGIIEGIGPRYCPSIEDKVMRFADKNSHQIFIEPEGLTTHELYPNGISTSLPFDVQVQIVRSMKGFENAHIVRPGYAIEYDFFDPRDLKQTYETKFIQGLFFAGQINGTTGYEEAAAQGLMAGLNASLFSQEKEGWSPRRDQAYMGVLIDDLSTMGTKEPYRMFTSRAEHRLLLREDNADLRLTEKARELGLVDDARWARFNQKIDNMEQERQRLKSTWMNPASTGIDELNQLLKTPMNREASGEDLLRRPEMTYDQLTSLTAFAPAIDDLEAAEQVEIQVKYEGYIKRQQDEIEKSLRHEHTKLPADLDYSDVKGLSNEVVLKLNTAKPETLGIASRISGITPAAISILLVHLKKIGMLKVGEENA.

FAD contacts are provided by residues 13-18 (GGGHAG), valine 125, and serine 180. Residue 273 to 287 (GPRYCPSIEDKVMRF) coordinates NAD(+). FAD is bound at residue glutamine 370.

It belongs to the MnmG family. Homodimer. Heterotetramer of two MnmE and two MnmG subunits. Requires FAD as cofactor.

It localises to the cytoplasm. Its function is as follows. NAD-binding protein involved in the addition of a carboxymethylaminomethyl (cmnm) group at the wobble position (U34) of certain tRNAs, forming tRNA-cmnm(5)s(2)U34. This Vibrio vulnificus (strain YJ016) protein is tRNA uridine 5-carboxymethylaminomethyl modification enzyme MnmG.